The chain runs to 439 residues: ATP-dependent protease ATPase subunit HslU (439 aa).

Residues I17, 59-64, D251, E317, and R389 contribute to the ATP site; that span reads GVGKTE.

Belongs to the ClpX chaperone family. HslU subfamily. As to quaternary structure, a double ring-shaped homohexamer of HslV is capped on each side by a ring-shaped HslU homohexamer. The assembly of the HslU/HslV complex is dependent on binding of ATP.

Its subcellular location is the cytoplasm. Its function is as follows. ATPase subunit of a proteasome-like degradation complex; this subunit has chaperone activity. The binding of ATP and its subsequent hydrolysis by HslU are essential for unfolding of protein substrates subsequently hydrolyzed by HslV. HslU recognizes the N-terminal part of its protein substrates and unfolds these before they are guided to HslV for hydrolysis. The sequence is that of ATP-dependent protease ATPase subunit HslU from Campylobacter jejuni subsp. jejuni serotype O:23/36 (strain 81-176).